The primary structure comprises 144 residues: Large ribosomal subunit protein uL15 (144 aa).

The tract at residues 1 to 58 (MRLNELAPEPGSRPSAKRVGRGIGSGLGKTGGRGHKGLKSRSGGSVAPGFEGGQQPLA) is disordered. Gly residues predominate over residues 21–31 (RGIGSGLGKTG).

This sequence belongs to the universal ribosomal protein uL15 family. As to quaternary structure, part of the 50S ribosomal subunit.

Binds to the 23S rRNA. In Marinobacter nauticus (strain ATCC 700491 / DSM 11845 / VT8) (Marinobacter aquaeolei), this protein is Large ribosomal subunit protein uL15.